Here is an 816-residue protein sequence, read N- to C-terminus: MSSSSAASIGPPQPPPPPAPPEEEKKCLNSELWHACAGPLVCLPTVGTRVVYFPQGHSEQVAASTNKEVEGHIPNYPNLPAQLICQLHDVTMHADVETDEVYAQMTLQPLNPQEQNDAYLPAEMGIMSKQPTNYFCKTLTASDTSTHGGFSVPRRAAERVFPPLDFTQQPPAQELIARDIHDIEWKFRHIFRGQPKRHLLTTGWSVFVSAKRLVAGDSVLFIWNEKNQLLLGIRRASRPQTVMPSSVLSSDSMHIGLLAAAAHAAATNSRFTIFYNPRASPSEFVIPLSKYIKAVFHTRISVGMRFRMLFETEESSVRRYMGTITEVSDADPVRWPSSYWRSVKVGWDESTAGERPPRVSLWEIEPLTTFPMYPSLFPLRVKHPWYSGVASLHDDSNALMWLRGVAGEGGFQSLNFQSPGIGSWGQQRLHPSLLSSDHDQYQAVVAAAAASQSGGYLKQQFLHLQQPMQSPQEHCNLNPLLQQQILQQASQQQIINPDAQNIQTMLSPSAIQQQLQQLQQMQQVQNDQKQKIQPDQSYQVPTSAVLPSPTSLPSHLREKFGFSDPNANSSSFITSSSSDNMLDSSFLQGSSKAVDLSRFNQPVASEQQQQQAWKQKFMGSQSVSFGGSVLHNSPTSKDGSVENKIGRDVQNQSLFSPQVDSSSLLYNMVPNLTSNVSDGNLSTIPSGSTYLQNAMYGCLDDSSGLLQNTGENDPATRTFVKVYKSGSVGRSLDITRFSNYAELREELGQMFGIKGQLDDPDRSGWQLVFVDRENDVLLLGDDPWESFVNSVWYIKILSPEDVHKMGKQGNDPRYLS.

Over residues 1 to 10 (MSSSSAASIG) the composition is skewed to low complexity. Positions 1–24 (MSSSSAASIGPPQPPPPPAPPEEE) are disordered. Residues 11–20 (PPQPPPPPAP) show a composition bias toward pro residues. Positions 135–237 (FCKTLTASDT…QLLLGIRRAS (103 aa)) form a DNA-binding region, TF-B3. Residues 526–565 (NDQKQKIQPDQSYQVPTSAVLPSPTSLPSHLREKFGFSDP) form a disordered region. One can recognise a PB1 domain in the interval 717–801 (RTFVKVYKSG…WYIKILSPED (85 aa)).

The protein belongs to the ARF family. Homodimers and heterodimers.

It is found in the nucleus. Auxin response factors (ARFs) are transcriptional factors that bind specifically to the DNA sequence 5'-TGTCTC-3' found in the auxin-responsive promoter elements (AuxREs). The sequence is that of Auxin response factor 12 (ARF12) from Oryza sativa subsp. indica (Rice).